We begin with the raw amino-acid sequence, 161 residues long: NADH-quinone oxidoreductase subunit I (161 aa).

2 4Fe-4S ferredoxin-type domains span residues 52 to 82 and 92 to 121; these read LRRY…IESS and TRYD…QGPN. [4Fe-4S] cluster-binding residues include Cys-62, Cys-65, Cys-68, Cys-72, Cys-101, Cys-104, Cys-107, and Cys-111.

It belongs to the complex I 23 kDa subunit family. NDH-1 is composed of 14 different subunits. Subunits NuoA, H, J, K, L, M, N constitute the membrane sector of the complex. [4Fe-4S] cluster is required as a cofactor.

The protein localises to the cell inner membrane. It carries out the reaction a quinone + NADH + 5 H(+)(in) = a quinol + NAD(+) + 4 H(+)(out). NDH-1 shuttles electrons from NADH, via FMN and iron-sulfur (Fe-S) centers, to quinones in the respiratory chain. The immediate electron acceptor for the enzyme in this species is believed to be ubiquinone. Couples the redox reaction to proton translocation (for every two electrons transferred, four hydrogen ions are translocated across the cytoplasmic membrane), and thus conserves the redox energy in a proton gradient. The polypeptide is NADH-quinone oxidoreductase subunit I (Pelagibacter ubique (strain HTCC1062)).